A 260-amino-acid polypeptide reads, in one-letter code: HMP-PP phosphatase (260 aa).

Asp-8 (nucleophile) is an active-site residue. 3 residues coordinate Mg(2+): Asp-8, Asp-10, and Asp-212.

This sequence belongs to the HAD-like hydrolase superfamily. Cof family. The cofactor is Mg(2+).

It catalyses the reaction 4-amino-2-methyl-5-(diphosphooxymethyl)pyrimidine + H2O = 4-amino-2-methyl-5-(phosphooxymethyl)pyrimidine + phosphate + H(+). Its function is as follows. Catalyzes the hydrolysis of 4-amino-2-methyl-5-hydroxymethylpyrimidine pyrophosphate (HMP-PP) to 4-amino-2-methyl-5-hydroxymethylpyrimidine phosphate (HMP-P). In Shigella boydii serotype 4 (strain Sb227), this protein is HMP-PP phosphatase.